The sequence spans 171 residues: MTDMQTPFVAKVVVHMGVGEAGERLVNAENIMADLTKGAKPIRSYARNTLPAFGIRKGQPIGCKATLRGKKAMDFLEMALKTYAVENVLHTRQFDATGNFGFGIEEHTDFPGQAYDPKIGIYGMDIIAVIEKKGTRTARRKIQQKKINSKLHVAREESMKFVTETFGIEVE.

Belongs to the universal ribosomal protein uL5 family. As to quaternary structure, part of the 50S ribosomal subunit; contacts the 5S rRNA and probably tRNA. Forms a bridge to the 30S subunit in the 70S ribosome.

Its function is as follows. This is one of the proteins that bind and probably mediate the attachment of the 5S RNA into the large ribosomal subunit, where it forms part of the central protuberance. In the 70S ribosome it contacts protein S13 of the 30S subunit (bridge B1b), connecting the 2 subunits; this bridge is implicated in subunit movement. May contact the P site tRNA; the 5S rRNA and some of its associated proteins might help stabilize positioning of ribosome-bound tRNAs. This Methanocorpusculum labreanum (strain ATCC 43576 / DSM 4855 / Z) protein is Large ribosomal subunit protein uL5.